A 283-amino-acid polypeptide reads, in one-letter code: Pantothenate synthetase (283 aa).

30 to 37 is an ATP binding site; that stretch reads MGNLHDGH. The Proton donor role is filled by His37. A (R)-pantoate-binding site is contributed by Gln61. Gln61 is a beta-alanine binding site. 149 to 152 lines the ATP pocket; that stretch reads GEKD. Gln155 serves as a coordination point for (R)-pantoate. 186–189 contributes to the ATP binding site; the sequence is LSSR.

The protein belongs to the pantothenate synthetase family. As to quaternary structure, homodimer.

It is found in the cytoplasm. The catalysed reaction is (R)-pantoate + beta-alanine + ATP = (R)-pantothenate + AMP + diphosphate + H(+). It functions in the pathway cofactor biosynthesis; (R)-pantothenate biosynthesis; (R)-pantothenate from (R)-pantoate and beta-alanine: step 1/1. Its function is as follows. Catalyzes the condensation of pantoate with beta-alanine in an ATP-dependent reaction via a pantoyl-adenylate intermediate. This chain is Pantothenate synthetase, found in Escherichia coli (strain SMS-3-5 / SECEC).